The sequence spans 508 residues: Photosystem II CP47 reaction center protein (508 aa).

The next 6 membrane-spanning stretches (helical) occupy residues 21-36 (AVHIMHTALVAGWAGS), 101-115 (IVFSGLCFLAAIWHW), 140-156 (GIHLFLAGVACFGFGAF), 203-218 (IAAGTLGILAGLFHLS), 237-252 (VLSSSIAAVFFAAFVV), and 457-472 (SFALLFFFGHIWHGAR).

Belongs to the PsbB/PsbC family. PsbB subfamily. In terms of assembly, PSII is composed of 1 copy each of membrane proteins PsbA, PsbB, PsbC, PsbD, PsbE, PsbF, PsbH, PsbI, PsbJ, PsbK, PsbL, PsbM, PsbT, PsbX, PsbY, PsbZ, Psb30/Ycf12, at least 3 peripheral proteins of the oxygen-evolving complex and a large number of cofactors. It forms dimeric complexes. The cofactor is Binds multiple chlorophylls. PSII binds additional chlorophylls, carotenoids and specific lipids..

The protein resides in the plastid. It is found in the chloroplast thylakoid membrane. One of the components of the core complex of photosystem II (PSII). It binds chlorophyll and helps catalyze the primary light-induced photochemical processes of PSII. PSII is a light-driven water:plastoquinone oxidoreductase, using light energy to abstract electrons from H(2)O, generating O(2) and a proton gradient subsequently used for ATP formation. This is Photosystem II CP47 reaction center protein from Trachelium caeruleum (Blue throatwort).